The chain runs to 432 residues: MCFSPVLEINMQSESNVTVRDDIEDIDTNMYQPLSYPLSFQVSLTGFLMLEIVLGLGSNLTVLVLYCMKSNLISSVSNIITMNLHVLDVIICVGCIPLTIVILLLSLERNTALICCFHEACVSFASVSTAINVFAITLDRYDISVKPANRILTMGRAVMLMTSIWIFSFFSFLIPFIEVNFFSLQSGNAWENKTLLCVSTSEYYTELGMYYHLLVQIPIFFFTVIVMLITYTKILQALNIRIGTRFSTGQKKKARKKKTISLTTHETTDMSQSSGGRNVVFGVRTSVSVIIALRRAVKRHRERRERQKRVFKMSLLIISTFLLCWTPISVLNTTILCLGPSDLLVKLRLCFLVMAYGTTIFHPLLYAFTRQKFQKVLKSKMKKRVVSIVEADPMPNNAVIHNSWIDPKRNKKVTYEDSEIREKCLVPQVVTD.

Residues 1-45 (MCFSPVLEINMQSESNVTVRDDIEDIDTNMYQPLSYPLSFQVSLT) are Cytoplasmic-facing. Residues 46-66 (GFLMLEIVLGLGSNLTVLVLY) form a helical membrane-spanning segment. Residues 67–85 (CMKSNLISSVSNIITMNLH) are Extracellular-facing. A helical transmembrane segment spans residues 86-106 (VLDVIICVGCIPLTIVILLLS). Over 107–115 (LERNTALIC) the chain is Cytoplasmic. A helical membrane pass occupies residues 116–136 (CFHEACVSFASVSTAINVFAI). The Extracellular segment spans residues 137–156 (TLDRYDISVKPANRILTMGR). Residues 157 to 177 (AVMLMTSIWIFSFFSFLIPFI) traverse the membrane as a helical segment. Residues 178–208 (EVNFFSLQSGNAWENKTLLCVSTSEYYTELG) are Cytoplasmic-facing. A helical transmembrane segment spans residues 209 to 229 (MYYHLLVQIPIFFFTVIVMLI). At 230–314 (TYTKILQALN…ERQKRVFKMS (85 aa)) the chain is on the extracellular side. Residues 315-335 (LLIISTFLLCWTPISVLNTTI) traverse the membrane as a helical segment. Topologically, residues 336–348 (LCLGPSDLLVKLR) are cytoplasmic. The chain crosses the membrane as a helical span at residues 349–369 (LCFLVMAYGTTIFHPLLYAFT). Over 370 to 432 (RQKFQKVLKS…KCLVPQVVTD (63 aa)) the chain is Extracellular.

This sequence belongs to the G-protein coupled receptor 1 family. In terms of tissue distribution, abundant levels detected in the brain. High expression in the heart (at protein level). No detectable expression in other peripheral tissues.

It localises to the cell membrane. Its function is as follows. Orphan G-protein coupled receptor. Seems to act through a G(i)/G(o) mediated pathway. May be involved in ciliogenesis. This is G-protein coupled receptor 22 from Rattus norvegicus (Rat).